We begin with the raw amino-acid sequence, 262 residues long: ELL-associated factor 2 (262 aa).

Residues 17 to 104 (LKLGESFEKQ…TGECRLEKLS (88 aa)) form a necessary for interaction with ELL region. Phosphoserine occurs at positions 146, 151, and 154. The segment at 170 to 237 (MDQMSSCDSS…EADATCHRLQ (68 aa)) is disordered. Over residues 174-192 (SSCDSSSDSKSSSSSSSED) the composition is skewed to low complexity. Positions 177-262 (DSSSDSKSSS…LSESESDSED (86 aa)) are necessary for transactivation activity. Residues 193 to 202 (SSSDSEDDDQ) show a composition bias toward acidic residues. The segment covering 227-237 (SEADATCHRLQ) has biased composition (basic and acidic residues). The tract at residues 248–262 (RSDLQLSESESDSED) is necessary for interaction with TCEA1 and transactivation activity.

This sequence belongs to the EAF family. As to quaternary structure, component of the super elongation complex (SEC), at least composed of EAF1, EAF2, CDK9, MLLT3/AF9, AFF (AFF1 or AFF4), the P-TEFb complex and ELL (ELL, ELL2 or ELL3). Interacts with ELL and ELL2. Isoform 1 and isoform 2 interact with TCEA1. As to expression, isoform 1 is expressed in ovary, uterus, mammary glands, brain, spleen, liver, lung, thymus, kidney, skeletal muscle, skin and testis. Isoform 2 is expressed in kidney.

Its subcellular location is the nucleus speckle. In terms of biological role, acts as a transcriptional transactivator of ELL and ELL2 elongation activities. Acts as a transcriptional transactivator of TCEA1 elongation activity. The polypeptide is ELL-associated factor 2 (Eaf2) (Mus musculus (Mouse)).